A 215-amino-acid chain; its full sequence is Sodium channel regulatory subunit beta-2 (215 aa).

The signal sequence occupies residues 1-29; sequence MHRDAWLPRPAFSLTGLSLFFSLVPSGRS. At 30–157 the chain is on the extracellular side; that stretch reads MEVTVPTTLS…LEVPPERDST (128 aa). The region spanning 32–154 is the Ig-like C2-type domain; the sequence is VTVPTTLSVL…QVLLEVPPER (123 aa). N-linked (GlcNAc...) asparagine glycosylation is found at asparagine 42, asparagine 66, and asparagine 74. Cystine bridges form between cysteine 50–cysteine 127 and cysteine 72–cysteine 75. The helical transmembrane segment at 158–179 threads the bilayer; the sequence is VAVIVGASVGGFLAVVILVLMV. Residues 180-215 are Cytoplasmic-facing; it reads VKCVRRKKEQKLSTDDLKTEEEGKTDGEGNAEDGAK. The disordered stretch occupies residues 187-215; sequence KEQKLSTDDLKTEEEGKTDGEGNAEDGAK. Over residues 189–215 the composition is skewed to basic and acidic residues; it reads QKLSTDDLKTEEEGKTDGEGNAEDGAK. The residue at position 192 (serine 192) is a Phosphoserine. Threonine 204 is subject to Phosphothreonine.

It belongs to the sodium channel auxiliary subunit SCN2B (TC 8.A.17) family. In terms of assembly, a voltage-gated sodium (Nav) channel consists of an ion-conducting pore-forming alpha subunit functional on its own that is regulated by one or more beta subunits. The beta subunit SCN2B is disulfide-linked to the pore-forming alpha subunit. Interacts with SCN1A; regulatory subunit of SCN1A/Nav1.1. Interacts with SCN2A; regulatory subunit of SCN2A/Nav1.2. Interacts with SCN3A; regulatory subunit of SCN3A/Nav1.3. Interacts with SCN5A; regulatory subunit of SCN5A/Nav1.5. Interacts with SCN8A; regulatory subunit of SCN8A/Nav1.6. Interacts with SCN9A; regulatory subunit of SCN9A/Nav1.7. Interacts with SCN10A; regulatory subunit of SCN10A/Nav1.8. Interacts with TNR; may play a crucial role in clustering and regulation of activity of SCN2B-containing Nav channels at nodes of Ranvier.

The protein resides in the cell membrane. It is found in the cell projection. The protein localises to the axon. Functionally, regulatory subunit of multiple voltage-gated sodium (Nav) channels directly mediating the depolarization of excitable membranes. Navs, also called VGSCs (voltage-gated sodium channels) or VDSCs (voltage-dependent sodium channels), operate by switching between closed and open conformations depending on the voltage difference across the membrane. In the open conformation they allow Na(+) ions to selectively pass through the pore, along their electrochemical gradient. The influx of Na+ ions provokes membrane depolarization, initiating the propagation of electrical signals throughout cells and tissues. The accessory beta subunits participate in localization and functional modulation of the Nav channels. Modulates the activity of SCN1A/Nav1.1, SCN2A/Nav1.2, SCN2A/Nav1.3, SCN5A/Nav1.5, SCN8A/Nav1.6, SCN9A/Nav1.7 and SCN10A/Nav1.8. This chain is Sodium channel regulatory subunit beta-2, found in Rattus norvegicus (Rat).